Consider the following 490-residue polypeptide: uncharacterized protein (490 aa).

Positions 1-19 are cleaved as a signal peptide; that stretch reads MSITSVSLYVYLICAGGHA.

This sequence belongs to the mimivirus L137 family.

This is an uncharacterized protein from Acanthamoeba polyphaga (Amoeba).